A 110-amino-acid polypeptide reads, in one-letter code: UPF0122 protein SH1678 (110 aa).

Belongs to the UPF0122 family.

In terms of biological role, might take part in the signal recognition particle (SRP) pathway. This is inferred from the conservation of its genetic proximity to ftsY/ffh. May be a regulatory protein. In Staphylococcus haemolyticus (strain JCSC1435), this protein is UPF0122 protein SH1678.